The sequence spans 360 residues: Abhydrolase domain-containing protein lid-1 (360 aa).

Positions 73-203 (AIVFIPGLGA…MSFLGGVAGY (131 aa)) constitute an AB hydrolase-1 domain.

It belongs to the peptidase S33 family. ABHD4/ABHD5 subfamily. In terms of assembly, interacts with atgl-1.

Its subcellular location is the lipid droplet. Acts coordinately with atgl-1 within the lipolytic cascade to distribute stored energy to tissues during nutritional deprivation. The sequence is that of Abhydrolase domain-containing protein lid-1 from Caenorhabditis elegans.